A 301-amino-acid chain; its full sequence is WD repeat-containing protein SL1-17 (301 aa).

WD repeat units follow at residues 11 to 54 (AHKE…LKCL), 59 to 98 (GHRL…LTKT), 101 to 140 (GDPA…KEGS), 143 to 182 (LEGK…VQFL), 184 to 223 (GHAT…LVIP), 227 to 266 (GHKG…EKHC), and 269 to 300 (THED…IYQC).

The protein is WD repeat-containing protein SL1-17 of Schistosoma mansoni (Blood fluke).